Here is a 975-residue protein sequence, read N- to C-terminus: Glycine dehydrogenase (decarboxylating) (975 aa).

At Lys723 the chain carries N6-(pyridoxal phosphate)lysine.

It belongs to the GcvP family. In terms of assembly, the glycine cleavage system is composed of four proteins: P, T, L and H. It depends on pyridoxal 5'-phosphate as a cofactor.

The enzyme catalyses N(6)-[(R)-lipoyl]-L-lysyl-[glycine-cleavage complex H protein] + glycine + H(+) = N(6)-[(R)-S(8)-aminomethyldihydrolipoyl]-L-lysyl-[glycine-cleavage complex H protein] + CO2. Its function is as follows. The glycine cleavage system catalyzes the degradation of glycine. The P protein binds the alpha-amino group of glycine through its pyridoxal phosphate cofactor; CO(2) is released and the remaining methylamine moiety is then transferred to the lipoamide cofactor of the H protein. This Burkholderia pseudomallei (strain 668) protein is Glycine dehydrogenase (decarboxylating).